The following is a 206-amino-acid chain: BAG family molecular chaperone regulator 1B (206 aa).

A BAG domain is found at 122 to 202 (IEAYIDELQQ…QYLSKLDSTK (81 aa)). Residue serine 144 is modified to Phosphoserine.

In terms of assembly, binds to the ATPase domain of HSP70/HSC chaperones.

In terms of biological role, inhibits the chaperone activity of HSP70/HSC70 by promoting substrate release. The chain is BAG family molecular chaperone regulator 1B (bag102) from Schizosaccharomyces pombe (strain 972 / ATCC 24843) (Fission yeast).